Reading from the N-terminus, the 180-residue chain is MPQKPARCYTKRRSKAFSGPPYTRKEYIHGVPPPKIQKFVMGNPHGDYDYIVEVYVTERGQIRHNALEAARVAVHKYLSTTIGDQNYFFRVRVYPHHVLRENKMMAFAGADRLQEGMRQAFGKPVGTAARVYPGQAVLEVRVKKEHLDHAKEALRRGASKLPLPSRIRVIPLKEEAKAAA.

This sequence belongs to the universal ribosomal protein uL16 family.

The sequence is that of Large ribosomal subunit protein uL16 from Hyperthermus butylicus (strain DSM 5456 / JCM 9403 / PLM1-5).